Reading from the N-terminus, the 943-residue chain is Isoleucine--tRNA ligase (943 aa).

The short motif at 58–68 (PYANGTIHIGH) is the 'HIGH' region element. Glutamate 567 contributes to the L-isoleucyl-5'-AMP binding site. The 'KMSKS' region signature appears at 608 to 612 (KMSKS). ATP is bound at residue lysine 611. Residues cysteine 906, cysteine 909, cysteine 926, and cysteine 929 each contribute to the Zn(2+) site.

This sequence belongs to the class-I aminoacyl-tRNA synthetase family. IleS type 1 subfamily. Monomer. It depends on Zn(2+) as a cofactor.

The protein resides in the cytoplasm. The enzyme catalyses tRNA(Ile) + L-isoleucine + ATP = L-isoleucyl-tRNA(Ile) + AMP + diphosphate. Functionally, catalyzes the attachment of isoleucine to tRNA(Ile). As IleRS can inadvertently accommodate and process structurally similar amino acids such as valine, to avoid such errors it has two additional distinct tRNA(Ile)-dependent editing activities. One activity is designated as 'pretransfer' editing and involves the hydrolysis of activated Val-AMP. The other activity is designated 'posttransfer' editing and involves deacylation of mischarged Val-tRNA(Ile). In Pseudomonas fluorescens (strain SBW25), this protein is Isoleucine--tRNA ligase.